A 221-amino-acid chain; its full sequence is uncharacterized protein (221 aa).

At 1-45 the chain is on the extracellular side; the sequence is MYAPIRSPITELNESTPSSIPVATSYATCSASFAKLVALLVDDMA. A helical transmembrane segment spans residues 46-66; sequence GLSIVLSEIYIYFKLLFLIVI. Residues 67–221 lie on the Cytoplasmic side of the membrane; it reads TESIQNKLED…KYIVVIKVEQ (155 aa).

Its subcellular location is the host membrane. This is an uncharacterized protein from Acidianus filamentous virus 1 (isolate United States/Yellowstone) (AFV-1).